Reading from the N-terminus, the 491-residue chain is Angiopoietin-related protein 1 (491 aa).

The first 23 residues, 1 to 23 (MKAFIWTLSVLFFLLMGIGHGRG), serve as a signal peptide directing secretion. Residues 80–168 (ITRMDLENLK…LNVTTEMLKM (89 aa)) adopt a coiled-coil conformation. N-linked (GlcNAc...) asparagine glycosylation is found at Asn-160 and Asn-188. A Fibrinogen C-terminal domain is found at 271 to 491 (FINEGPYKDC…AVQMLIKPID (221 aa)). 2 disulfides stabilise this stretch: Cys-280–Cys-309 and Cys-432–Cys-445.

The protein resides in the secreted. This chain is Angiopoietin-related protein 1 (ANGPTL1), found in Bos taurus (Bovine).